The chain runs to 282 residues: Protein FRG2-like-2 (282 aa).

Residues M1–L10 show a composition bias toward basic and acidic residues. 2 disordered regions span residues M1–C96 and G249–P282. 3 stretches are compositionally biased toward polar residues: residues S13–E31, R58–K68, and G79–E94.

Belongs to the FRG2 family.

It localises to the nucleus. The chain is Protein FRG2-like-2 (FRG2C) from Homo sapiens (Human).